Reading from the N-terminus, the 120-residue chain is Large ribosomal subunit protein uL22 (120 aa).

Belongs to the universal ribosomal protein uL22 family. In terms of assembly, part of the 50S ribosomal subunit.

Its function is as follows. This protein binds specifically to 23S rRNA; its binding is stimulated by other ribosomal proteins, e.g. L4, L17, and L20. It is important during the early stages of 50S assembly. It makes multiple contacts with different domains of the 23S rRNA in the assembled 50S subunit and ribosome. The globular domain of the protein is located near the polypeptide exit tunnel on the outside of the subunit, while an extended beta-hairpin is found that lines the wall of the exit tunnel in the center of the 70S ribosome. In Acaryochloris marina (strain MBIC 11017), this protein is Large ribosomal subunit protein uL22.